A 371-amino-acid polypeptide reads, in one-letter code: Cytochrome b (371 aa).

4 helical membrane-spanning segments follow: residues Phe-25–Ile-45, Trp-69–Ile-90, Trp-105–Leu-125, and Phe-170–Ile-190. The heme b site is built by His-75 and His-89. 2 residues coordinate heme b: His-174 and His-188. Residue His-193 participates in a ubiquinone binding. Transmembrane regions (helical) follow at residues Tyr-218–Ser-238, Leu-280–His-300, Leu-312–Thr-332, and Phe-339–Pro-358.

This sequence belongs to the cytochrome b family. The cytochrome bc1 complex contains 3 respiratory subunits (MT-CYB, CYC1 and UQCRFS1), 2 core proteins (UQCRC1 and UQCRC2) and probably 6 low-molecular weight proteins. Requires heme b as cofactor.

The protein resides in the mitochondrion inner membrane. Its function is as follows. Component of the ubiquinol-cytochrome c reductase complex (complex III or cytochrome b-c1 complex) that is part of the mitochondrial respiratory chain. The b-c1 complex mediates electron transfer from ubiquinol to cytochrome c. Contributes to the generation of a proton gradient across the mitochondrial membrane that is then used for ATP synthesis. The protein is Cytochrome b (MT-CYB) of Micrurus fulvius (Eastern coral snake).